Consider the following 130-residue polypeptide: Small ribosomal subunit protein uS8 (130 aa).

It belongs to the universal ribosomal protein uS8 family. In terms of assembly, part of the 30S ribosomal subunit. Contacts proteins S5 and S12.

Functionally, one of the primary rRNA binding proteins, it binds directly to 16S rRNA central domain where it helps coordinate assembly of the platform of the 30S subunit. This chain is Small ribosomal subunit protein uS8, found in Enterobacter sp. (strain 638).